A 305-amino-acid polypeptide reads, in one-letter code: UDP-3-O-acyl-N-acetylglucosamine deacetylase (305 aa).

The Zn(2+) site is built by histidine 78, histidine 237, and aspartate 241. Histidine 264 serves as the catalytic Proton donor.

It belongs to the LpxC family. Zn(2+) serves as cofactor.

The catalysed reaction is a UDP-3-O-[(3R)-3-hydroxyacyl]-N-acetyl-alpha-D-glucosamine + H2O = a UDP-3-O-[(3R)-3-hydroxyacyl]-alpha-D-glucosamine + acetate. The protein operates within glycolipid biosynthesis; lipid IV(A) biosynthesis; lipid IV(A) from (3R)-3-hydroxytetradecanoyl-[acyl-carrier-protein] and UDP-N-acetyl-alpha-D-glucosamine: step 2/6. In terms of biological role, catalyzes the hydrolysis of UDP-3-O-myristoyl-N-acetylglucosamine to form UDP-3-O-myristoylglucosamine and acetate, the committed step in lipid A biosynthesis. The chain is UDP-3-O-acyl-N-acetylglucosamine deacetylase from Cupriavidus necator (strain ATCC 17699 / DSM 428 / KCTC 22496 / NCIMB 10442 / H16 / Stanier 337) (Ralstonia eutropha).